Reading from the N-terminus, the 394-residue chain is Elongation factor Tu-A (394 aa).

The 195-residue stretch at 10–204 folds into the tr-type G domain; that stretch reads KPHVNVGTIG…ALDTYIPEPE (195 aa). The segment at 19-26 is G1; that stretch reads GHVDHGKT. 19–26 is a binding site for GTP; that stretch reads GHVDHGKT. Position 26 (T26) interacts with Mg(2+). Residues 60-64 form a G2 region; the sequence is GITIN. The interval 81–84 is G3; that stretch reads DCPG. GTP is bound by residues 81-85 and 136-139; these read DCPGH and NKCD. The tract at residues 136-139 is G4; sequence NKCD. Residues 174-176 are G5; that stretch reads SAL.

Belongs to the TRAFAC class translation factor GTPase superfamily. Classic translation factor GTPase family. EF-Tu/EF-1A subfamily. In terms of assembly, monomer.

The protein localises to the cytoplasm. It catalyses the reaction GTP + H2O = GDP + phosphate + H(+). GTP hydrolase that promotes the GTP-dependent binding of aminoacyl-tRNA to the A-site of ribosomes during protein biosynthesis. The polypeptide is Elongation factor Tu-A (Vibrio cholerae serotype O1 (strain ATCC 39315 / El Tor Inaba N16961)).